The sequence spans 214 residues: Large ribosomal subunit protein uL3 (214 aa).

Gln153 bears the N5-methylglutamine mark.

It belongs to the universal ribosomal protein uL3 family. As to quaternary structure, part of the 50S ribosomal subunit. Forms a cluster with proteins L14 and L19. In terms of processing, methylated by PrmB.

One of the primary rRNA binding proteins, it binds directly near the 3'-end of the 23S rRNA, where it nucleates assembly of the 50S subunit. This Methylobacillus flagellatus (strain ATCC 51484 / DSM 6875 / VKM B-1610 / KT) protein is Large ribosomal subunit protein uL3.